Consider the following 112-residue polypeptide: Nitrogenase-stabilizing/protective protein NifW (112 aa).

It belongs to the NifW family. As to quaternary structure, homotrimer; associates with NifD.

Functionally, may protect the nitrogenase Fe-Mo protein from oxidative damage. The chain is Nitrogenase-stabilizing/protective protein NifW from Paraburkholderia xenovorans (strain LB400).